Consider the following 363-residue polypeptide: Aminomethyltransferase (363 aa).

The protein belongs to the GcvT family. The glycine cleavage system is composed of four proteins: P, T, L and H.

The catalysed reaction is N(6)-[(R)-S(8)-aminomethyldihydrolipoyl]-L-lysyl-[protein] + (6S)-5,6,7,8-tetrahydrofolate = N(6)-[(R)-dihydrolipoyl]-L-lysyl-[protein] + (6R)-5,10-methylene-5,6,7,8-tetrahydrofolate + NH4(+). In terms of biological role, the glycine cleavage system catalyzes the degradation of glycine. In Staphylococcus saprophyticus subsp. saprophyticus (strain ATCC 15305 / DSM 20229 / NCIMB 8711 / NCTC 7292 / S-41), this protein is Aminomethyltransferase.